Here is a 622-residue protein sequence, read N- to C-terminus: Prolactin receptor (622 aa).

Residues 1–24 (MKENVASATVFTLLLFLNTCLLNG) form the signal peptide. At 25–234 (QLPPGKPEIF…QIPSDFTMND (210 aa)) the chain is on the extracellular side. 2 Fibronectin type-III domains span residues 27–128 (PPGK…VQPD) and 129–229 (PPLE…IPSD). Cys-36 and Cys-46 are oxidised to a cystine. A glycan (N-linked (GlcNAc...) asparagine) is linked at Asn-59. Cys-75 and Cys-86 are joined by a disulfide. N-linked (GlcNAc...) asparagine glycosylation is present at Asn-104. The Zn(2+) site is built by Asp-211 and His-212. The WSXWS motif motif lies at 215–219 (WSAWS). A glycan (N-linked (GlcNAc...) asparagine) is linked at Asn-233. The chain crosses the membrane as a helical span at residues 235 to 258 (TTVWISVAVLSAVICLIIVWAVAL). The Cytoplasmic portion of the chain corresponds to 259 to 622 (KGYSMVTCIF…DPACFTHSFH (364 aa)). The short motif at 267–275 (IFPPVPGPK) is the Box 1 motif element. 3 disordered regions span residues 326-378 (MSVH…YDPE), 461-505 (SSQT…GSAK), and 520-545 (ALSL…NNKE). Residues 466–486 (KSREEGKATQQREVESFHSET) show a composition bias toward basic and acidic residues.

The protein belongs to the type I cytokine receptor family. Type 1 subfamily. As to quaternary structure, homodimer upon hormone binding. Interacts with SMARCA1. Interacts with GH1. Interacts with CSH. Interacts with NEK3 and VAV2 and this interaction is prolactin-dependent. In terms of tissue distribution, expressed in breast, placenta, kidney, liver and pancreas.

It localises to the membrane. The protein resides in the secreted. In terms of biological role, this is a receptor for the anterior pituitary hormone prolactin (PRL). Acts as a prosurvival factor for spermatozoa by inhibiting sperm capacitation through suppression of SRC kinase activation and stimulation of AKT. Isoform 4 is unable to transduce prolactin signaling. Isoform 6 is unable to transduce prolactin signaling. The protein is Prolactin receptor (PRLR) of Homo sapiens (Human).